The primary structure comprises 83 residues: Bublin coiled-coil protein (83 aa).

A disordered region spans residues 1–25; it reads MSGPNGDLGMPVDAGTEGENDSFGE. Residues 25–74 are a coiled coil; it reads EAEYAAINSMLDQINSCLDHLEEKNDHLHARLQELLESNRQTRLEFQQQL. Position 82 is a phosphoserine (Ser82).

This sequence belongs to the UPF0184 (EST00098) family.

It is found in the cell junction. The protein localises to the cytoplasm. Its subcellular location is the cytoskeleton. Its function is as follows. Essential for intermediate filament organization in intestinal cells, interacts with intermediate filament and regulates intestinal lumen morphology. In Mus musculus (Mouse), this protein is Bublin coiled-coil protein.